The chain runs to 295 residues: Dehydrodolichyl diphosphate synthase 6 (295 aa).

The protein belongs to the UPP synthase family. The cofactor is Mg(2+).

It participates in protein modification; protein glycosylation. Functionally, catalyzes cis-prenyl chain elongation to produce the polyprenyl backbone of dolichol, a glycosyl carrier-lipid required for the biosynthesis of several classes of glycoprotein. This Arabidopsis thaliana (Mouse-ear cress) protein is Dehydrodolichyl diphosphate synthase 6.